Consider the following 496-residue polypeptide: Glycerol kinase (496 aa).

ADP is bound at residue threonine 12. ATP-binding residues include threonine 12, threonine 13, and serine 14. Threonine 12 contacts sn-glycerol 3-phosphate. Arginine 16 is a binding site for ADP. Residues arginine 82, glutamate 83, and tyrosine 134 each coordinate sn-glycerol 3-phosphate. Glycerol contacts are provided by arginine 82, glutamate 83, and tyrosine 134. Histidine 230 is modified (phosphohistidine; by HPr). Aspartate 244 provides a ligand contact to sn-glycerol 3-phosphate. Aspartate 244 and glutamine 245 together coordinate glycerol. Positions 266 and 309 each coordinate ADP. ATP-binding residues include threonine 266, glycine 309, glutamine 313, and glycine 410. ADP contacts are provided by glycine 410 and asparagine 414.

Belongs to the FGGY kinase family. In terms of assembly, homotetramer and homodimer (in equilibrium). Post-translationally, the phosphoenolpyruvate-dependent sugar phosphotransferase system (PTS), including enzyme I, and histidine-containing protein (HPr) are required for the phosphorylation, which leads to the activation of the enzyme.

It carries out the reaction glycerol + ATP = sn-glycerol 3-phosphate + ADP + H(+). It functions in the pathway polyol metabolism; glycerol degradation via glycerol kinase pathway; sn-glycerol 3-phosphate from glycerol: step 1/1. With respect to regulation, activated by phosphorylation and inhibited by fructose 1,6-bisphosphate (FBP). Functionally, key enzyme in the regulation of glycerol uptake and metabolism. Catalyzes the phosphorylation of glycerol to yield sn-glycerol 3-phosphate. In Bacillus velezensis (strain DSM 23117 / BGSC 10A6 / LMG 26770 / FZB42) (Bacillus amyloliquefaciens subsp. plantarum), this protein is Glycerol kinase.